Consider the following 214-residue polypeptide: 3-demethoxyubiquinol 3-hydroxylase (214 aa).

Fe cation-binding residues include Glu-63, Glu-93, His-96, Glu-145, Glu-177, and His-180.

The protein belongs to the COQ7 family. Fe cation serves as cofactor.

It is found in the cell membrane. It catalyses the reaction a 5-methoxy-2-methyl-3-(all-trans-polyprenyl)benzene-1,4-diol + AH2 + O2 = a 3-demethylubiquinol + A + H2O. It participates in cofactor biosynthesis; ubiquinone biosynthesis. In terms of biological role, catalyzes the hydroxylation of 2-nonaprenyl-3-methyl-6-methoxy-1,4-benzoquinol during ubiquinone biosynthesis. The protein is 3-demethoxyubiquinol 3-hydroxylase of Psychrobacter arcticus (strain DSM 17307 / VKM B-2377 / 273-4).